The primary structure comprises 62 residues: Metallothionein-like protein 3A (62 aa).

It belongs to the metallothionein superfamily. Type 15 family.

In terms of biological role, metallothioneins have a high content of cysteine residues that bind various heavy metals. The sequence is that of Metallothionein-like protein 3A (MT3A) from Oryza sativa subsp. indica (Rice).